The sequence spans 161 residues: Regulator of ribonuclease activity A (161 aa).

Belongs to the RraA family. In terms of assembly, homotrimer. Binds to both RNA-binding sites in the C-terminal region of Rne and to RhlB.

It localises to the cytoplasm. Functionally, globally modulates RNA abundance by binding to RNase E (Rne) and regulating its endonucleolytic activity. Can modulate Rne action in a substrate-dependent manner by altering the composition of the degradosome. Modulates RNA-binding and helicase activities of the degradosome. The polypeptide is Regulator of ribonuclease activity A (Salmonella choleraesuis (strain SC-B67)).